The chain runs to 255 residues: CDP-diacylglycerol pyrophosphatase (255 aa).

Residues 5 to 27 traverse the membrane as a helical segment; that stretch reads LLITVALIAVLALTTLVAWRYLF.

The protein belongs to the Cdh family.

The protein resides in the cell inner membrane. It catalyses the reaction a CDP-1,2-diacyl-sn-glycerol + H2O = a 1,2-diacyl-sn-glycero-3-phosphate + CMP + 2 H(+). The protein operates within phospholipid metabolism; CDP-diacylglycerol degradation; phosphatidate from CDP-diacylglycerol: step 1/1. In Cronobacter sakazakii (strain ATCC BAA-894) (Enterobacter sakazakii), this protein is CDP-diacylglycerol pyrophosphatase.